Here is a 317-residue protein sequence, read N- to C-terminus: MITRLVMIFSVLLLLSGCGQTPFKGKIEKVGMLFPDTINDLVWGTKGYKGLLNIQSKYNVDVYYKEGVKTEEDIINAIEDFHKRGVNLLYGHGSEYAEVFNLVGEDYPDMEFVISNAKAKADNVTSVHFSGEAMGFFGGMTAAHMSKTNQVGVIASFTWQPEVDGFIKGAKYENPDIEVNTKYTDHWDDDTTAVKLYQKMKNEGADVVYPAGDGYNVPVIQQIKKDGLYAIGYVTDQSDLGENTVLTSTVQNVDKAYEIIAEQFNKGTLEGGDHYYDLNTGVVEMGTFSPLVDQDFQQRIAKLIKTYNKTGELPKNE.

The first 17 residues, 1-17 (MITRLVMIFSVLLLLSG), serve as a signal peptide directing secretion. A lipid anchor (N-palmitoyl cysteine) is attached at cysteine 18. The S-diacylglycerol cysteine moiety is linked to residue cysteine 18.

This sequence belongs to the BMP lipoprotein family.

The protein resides in the cell membrane. Positive activator of the comK gene. This Bacillus subtilis (strain 168) protein is Transcriptional activator protein med (med).